Reading from the N-terminus, the 118-residue chain is MARVKRGVVAHAKHKKVLEQAKGFYGRRKNTIRTAKAAVDKAGQYAYRDRKVRKRAFRSLWIQRINAGARLEGFTYSQFIHGLDVAGIVMDRKVLADIAGNDPAAFKAIADKVRAALA.

This sequence belongs to the bacterial ribosomal protein bL20 family.

Binds directly to 23S ribosomal RNA and is necessary for the in vitro assembly process of the 50S ribosomal subunit. It is not involved in the protein synthesizing functions of that subunit. The protein is Large ribosomal subunit protein bL20 of Caulobacter vibrioides (strain ATCC 19089 / CIP 103742 / CB 15) (Caulobacter crescentus).